Reading from the N-terminus, the 116-residue chain is NADH-ubiquinone oxidoreductase chain 3 (116 aa).

3 helical membrane passes run 6–26 (FMLL…FWLA), 56–76 (FFLV…LLPL), and 85–105 (PLLT…GLVY).

The protein belongs to the complex I subunit 3 family.

The protein resides in the mitochondrion membrane. The catalysed reaction is a ubiquinone + NADH + 5 H(+)(in) = a ubiquinol + NAD(+) + 4 H(+)(out). Core subunit of the mitochondrial membrane respiratory chain NADH dehydrogenase (Complex I) that is believed to belong to the minimal assembly required for catalysis. Complex I functions in the transfer of electrons from NADH to the respiratory chain. The immediate electron acceptor for the enzyme is believed to be ubiquinone. This chain is NADH-ubiquinone oxidoreductase chain 3 (MT-ND3), found in Struthio camelus (Common ostrich).